The following is a 109-amino-acid chain: Large ribosomal subunit protein uL22 (109 aa).

The protein belongs to the universal ribosomal protein uL22 family. Part of the 50S ribosomal subunit.

In terms of biological role, this protein binds specifically to 23S rRNA; its binding is stimulated by other ribosomal proteins, e.g. L4, L17, and L20. It is important during the early stages of 50S assembly. It makes multiple contacts with different domains of the 23S rRNA in the assembled 50S subunit and ribosome. Its function is as follows. The globular domain of the protein is located near the polypeptide exit tunnel on the outside of the subunit, while an extended beta-hairpin is found that lines the wall of the exit tunnel in the center of the 70S ribosome. In Wolinella succinogenes (strain ATCC 29543 / DSM 1740 / CCUG 13145 / JCM 31913 / LMG 7466 / NCTC 11488 / FDC 602W) (Vibrio succinogenes), this protein is Large ribosomal subunit protein uL22.